We begin with the raw amino-acid sequence, 865 residues long: Ribosome biogenesis protein BOP1 homolog (865 aa).

2 disordered regions span residues 1 to 195 (MVAN…LKLG) and 207 to 240 (KTRGLGVFPPVPKRKGKAAQDEYAAGDTSDEEDI). Acidic residues-rich tracts occupy residues 30–44 (LDESNDEDNSNESDY), 57–79 (NEGEDSSDSDGEYATDDDEDDVL), and 87–159 (DGEE…EEEA). Positions 160 to 180 (KENGKEKPAKAKAERKQREEQ) are enriched in basic and acidic residues. WD repeat units lie at residues 526–565 (GHTSLIRCISVEPKGEYIVTGSDDMTVKIWEISTARCIRT), 567–607 (PTGD…YMLV), 651–693 (THFR…SQVP), 696–734 (KSKGLIQCVLFHPIKPCLFVATQRHIRVYDLVKQLMMKK), 737–776 (PGCKWISSMAIHPKGDNLLIGTYEKRLMWFDLDLSTKPYQ), 780–819 (IHNAAIRSVAFHPRYPLFASAGDDRSVIVSHGMVYNDLLQ), and 835–865 (VNDFSVFDVVFHPTQPWVFSSGADNTVRLYT).

This sequence belongs to the WD repeat BOP1/ERB1 family.

Its subcellular location is the nucleus. It localises to the nucleolus. It is found in the nucleoplasm. Functionally, required for maturation of ribosomal RNAs and formation of the large ribosomal subunit. This is Ribosome biogenesis protein BOP1 homolog from Anopheles gambiae (African malaria mosquito).